The following is a 150-amino-acid chain: Cytochrome c-type biogenesis protein CcmE (150 aa).

Over 1–7 the chain is Cytoplasmic; the sequence is MTRKQKR. Residues 8–28 traverse the membrane as a helical; Signal-anchor for type II membrane protein segment; that stretch reads LAIIGGGVGFLTAAVLLVMFA. Residues 29–150 are Periplasmic-facing; it reads FSQAVAYFYV…VTLGGKENIQ (122 aa). Positions 123 and 127 each coordinate heme.

It belongs to the CcmE/CycJ family.

It is found in the cell inner membrane. In terms of biological role, heme chaperone required for the biogenesis of c-type cytochromes. Transiently binds heme delivered by CcmC and transfers the heme to apo-cytochromes in a process facilitated by CcmF and CcmH. In Sinorhizobium fredii (strain NBRC 101917 / NGR234), this protein is Cytochrome c-type biogenesis protein CcmE.